Here is a 143-residue protein sequence, read N- to C-terminus: Phosphoribosyl-AMP cyclohydrolase (143 aa).

Asp-86 is a Mg(2+) binding site. Cys-87 serves as a coordination point for Zn(2+). Positions 88 and 90 each coordinate Mg(2+). 2 residues coordinate Zn(2+): Cys-103 and Cys-110.

This sequence belongs to the PRA-CH family. Homodimer. The cofactor is Mg(2+). Zn(2+) serves as cofactor.

The protein localises to the cytoplasm. The catalysed reaction is 1-(5-phospho-beta-D-ribosyl)-5'-AMP + H2O = 1-(5-phospho-beta-D-ribosyl)-5-[(5-phospho-beta-D-ribosylamino)methylideneamino]imidazole-4-carboxamide. Its pathway is amino-acid biosynthesis; L-histidine biosynthesis; L-histidine from 5-phospho-alpha-D-ribose 1-diphosphate: step 3/9. Catalyzes the hydrolysis of the adenine ring of phosphoribosyl-AMP. This chain is Phosphoribosyl-AMP cyclohydrolase, found in Rhodospirillum rubrum (strain ATCC 11170 / ATH 1.1.1 / DSM 467 / LMG 4362 / NCIMB 8255 / S1).